Here is a 239-residue protein sequence, read N- to C-terminus: Ribosomal RNA small subunit methyltransferase G (239 aa).

Residues G79, F84, 130 to 131 (AE), and R149 each bind S-adenosyl-L-methionine.

The protein belongs to the methyltransferase superfamily. RNA methyltransferase RsmG family.

It is found in the cytoplasm. Specifically methylates the N7 position of a guanine in 16S rRNA. In Pelotomaculum thermopropionicum (strain DSM 13744 / JCM 10971 / SI), this protein is Ribosomal RNA small subunit methyltransferase G.